The following is a 386-amino-acid chain: DNA methyltransferase CcrM (386 aa).

The region spanning 280–382 (LGKAELTVMT…LRKIIREQMA (103 aa)) is the RAMA domain.

This sequence belongs to the N(4)/N(6)-methyltransferase family.

The catalysed reaction is a 2'-deoxyadenosine in DNA + S-adenosyl-L-methionine = an N(6)-methyl-2'-deoxyadenosine in DNA + S-adenosyl-L-homocysteine + H(+). In terms of biological role, a beta subtype methylase that recognizes the double-stranded sequence 5'-GANTC-3' and methylates A-2 on both strands. CcrM-mediated methylation has important cellular functions. Contributes to the accurate cell-cycle control of DNA replication and cellular morphology. The protein is DNA methyltransferase CcrM (ccrM) of Brucella abortus (strain S19).